We begin with the raw amino-acid sequence, 192 residues long: Adenylate kinase (192 aa).

11–16 (GSGKGT) lines the ATP pocket. The NMP stretch occupies residues 31-60 (STGDIFRANVKGETPLGIEAKKYMDNGDFV). Residues Thr32, Arg37, 58–60 (DFV), 86–89 (GYPR), and Gln93 contribute to the AMP site. Residues 127–137 (GRAKETGRSDD) are LID. Arg128 contributes to the ATP binding site. Arg134 and Arg145 together coordinate AMP. Gly173 is an ATP binding site.

The protein belongs to the adenylate kinase family. As to quaternary structure, monomer.

It is found in the cytoplasm. It catalyses the reaction AMP + ATP = 2 ADP. It participates in purine metabolism; AMP biosynthesis via salvage pathway; AMP from ADP: step 1/1. In terms of biological role, catalyzes the reversible transfer of the terminal phosphate group between ATP and AMP. Plays an important role in cellular energy homeostasis and in adenine nucleotide metabolism. The sequence is that of Adenylate kinase from Pseudarthrobacter chlorophenolicus (strain ATCC 700700 / DSM 12829 / CIP 107037 / JCM 12360 / KCTC 9906 / NCIMB 13794 / A6) (Arthrobacter chlorophenolicus).